The sequence spans 248 residues: Peptidyl-prolyl cis-trans isomerase, chloroplastic (248 aa).

The region spanning 85 to 243 (FFDIEIGGES…KPCKIAKSGE (159 aa)) is the PPIase cyclophilin-type domain. The disordered stretch occupies residues 223–248 (QETSKLDNSPKKPCKIAKSGELPLDG).

It belongs to the cyclophilin-type PPIase family. Highly expressed in leaf.

It localises to the plastid. The protein localises to the chloroplast stroma. The enzyme catalyses [protein]-peptidylproline (omega=180) = [protein]-peptidylproline (omega=0). Its activity is regulated as follows. Binds cyclosporin A (CsA). CsA mediates some of its effects via an inhibitory action on PPIase. In terms of biological role, PPIases accelerate the folding of proteins. It catalyzes the cis-trans isomerization of proline imidic peptide bonds in oligopeptides. The protein is Peptidyl-prolyl cis-trans isomerase, chloroplastic of Vicia faba (Broad bean).